The following is a 681-amino-acid chain: Methionine--tRNA ligase (681 aa).

A 'HIGH' region motif is present at residues 27–37 (DYANGTPHIGH). The short motif at 316–320 (KMGKS) is the 'KMSKS' region element. K319 provides a ligand contact to ATP. The interval 522–571 (FPKPEPKADETKNAEAKPPKPQAKKEKKTVTDTAPAKTTEQKPEAAAPAQ) is disordered. Over residues 525-539 (PEPKADETKNAEAKP) the composition is skewed to basic and acidic residues. The tRNA-binding domain maps to 580–681 (DFAKIDLRIA…LDLPSGTKVR (102 aa)).

This sequence belongs to the class-I aminoacyl-tRNA synthetase family. MetG type 2B subfamily. In terms of assembly, homodimer.

It is found in the cytoplasm. It catalyses the reaction tRNA(Met) + L-methionine + ATP = L-methionyl-tRNA(Met) + AMP + diphosphate. Is required not only for elongation of protein synthesis but also for the initiation of all mRNA translation through initiator tRNA(fMet) aminoacylation. In Deinococcus radiodurans (strain ATCC 13939 / DSM 20539 / JCM 16871 / CCUG 27074 / LMG 4051 / NBRC 15346 / NCIMB 9279 / VKM B-1422 / R1), this protein is Methionine--tRNA ligase (metG).